Consider the following 536-residue polypeptide: Cytochrome P450 monooxygenase macC (536 aa).

Residues 2-22 (ALLYITTAALALLLLFLRAVF) traverse the membrane as a helical segment. A heme-binding site is contributed by C448.

It belongs to the cytochrome P450 family. It depends on heme as a cofactor.

Its subcellular location is the membrane. It functions in the pathway secondary metabolite biosynthesis; terpenoid biosynthesis. Cytochrome P450 monooxygenase; part of the gene cluster that mediates the biosynthesis of macrophorins, isoprenoid epoxycyclohexenones containing cyclized drimane moieties. The first step of the pathway is the synthesis of 6-methylsalicylic acid (6-MSA) by the polyketide synthase macA. 6-MSA is then converted to m-cresol by the decarboxylase macB. The cytochrome P450 monooxygenase macC then catalyzes the oxidation of m-cresol to toluquinol. Epoxidation of toluquinol is then performed by the short chain dehydrogenase macD, with the help of macE, and a further prenylation by macG leads to 7-deacetoxyyanuthone A. The next step is the hydroxylation of C-22 of 7-deacetoxyyanuthone A by the cytochrome P450 monooxygenase macH to yield 22-deacetylyanuthone A. O-Mevalon transferase macI then attaches mevalon to the hydroxyl group of 22-deacetylyanuthone A to produce yanuthone E. The terpene cyclase macJ catalyzes the cyclization of 22-deacetylyanuthone A to macrophorin A. MacJ is also able to catalyze cyclization of yanuthone E and 7-deacetoxyyanuthone A to their corresponding macrophorins. The macJ products can be further modified by macH and macJ, as well as by the FAD-dependent monooxygenase macF, to produce additional macrophorins, including 4'-oxomacrophorin A, 4'-oxomacrophorin D and 4'-oxomacrophorin E. This chain is Cytochrome P450 monooxygenase macC, found in Penicillium terrestre.